Here is a 474-residue protein sequence, read N- to C-terminus: Glutamate--tRNA ligase (474 aa).

Residues 9-19 (PSPTGYLHVGG) carry the 'HIGH' region motif. The short motif at 240 to 244 (KLSKR) is the 'KMSKS' region element. K243 serves as a coordination point for ATP.

This sequence belongs to the class-I aminoacyl-tRNA synthetase family. Glutamate--tRNA ligase type 1 subfamily. In terms of assembly, monomer.

It is found in the cytoplasm. It catalyses the reaction tRNA(Glu) + L-glutamate + ATP = L-glutamyl-tRNA(Glu) + AMP + diphosphate. Functionally, catalyzes the attachment of glutamate to tRNA(Glu) in a two-step reaction: glutamate is first activated by ATP to form Glu-AMP and then transferred to the acceptor end of tRNA(Glu). The chain is Glutamate--tRNA ligase from Vibrio cholerae serotype O1 (strain ATCC 39315 / El Tor Inaba N16961).